An 84-amino-acid chain; its full sequence is uncharacterized protein (84 aa).

2 stretches are compositionally biased toward basic residues: residues 1–15 (MPPHGHHHHGHHGHH) and 67–84 (HHGHHGHHGHHGHHGHFF). Disordered stretches follow at residues 1-22 (MPPHGHHHHGHHGHHEHVTYTT) and 64-84 (TSHHHGHHGHHGHHGHHGHFF).

This is an uncharacterized protein from Dictyostelium discoideum (Social amoeba).